Here is a 459-residue protein sequence, read N- to C-terminus: Zinc finger chaperone zpr1 (459 aa).

2 C4-type zinc fingers span residues 38–70 and 259–291; these read CMEC…CPHC and CPSC…CDRC.

This sequence belongs to the ZPR1 family.

Its subcellular location is the cytoplasm. The protein localises to the nucleus. In terms of biological role, acts as a protein folding chaperone for elongation factor 1-alpha. The protein is Zinc finger chaperone zpr1 of Schizosaccharomyces pombe (strain 972 / ATCC 24843) (Fission yeast).